A 197-amino-acid chain; its full sequence is Ribosome maturation factor RimP (197 aa).

The protein belongs to the RimP family.

It is found in the cytoplasm. Its function is as follows. Required for maturation of 30S ribosomal subunits. The chain is Ribosome maturation factor RimP from Acidovorax ebreus (strain TPSY) (Diaphorobacter sp. (strain TPSY)).